Here is a 541-residue protein sequence, read N- to C-terminus: Membrane protein insertase YidC (541 aa).

Helical transmembrane passes span 7–27 (LFLV…QTDH), 340–360 (QLIH…TFIV), 415–435 (LGGC…YYML), 453–473 (LAAP…MFFI), and 494–514 (PVIF…YYIV).

Belongs to the OXA1/ALB3/YidC family. Type 1 subfamily. As to quaternary structure, interacts with the Sec translocase complex via SecD. Specifically interacts with transmembrane segments of nascent integral membrane proteins during membrane integration.

It is found in the cell inner membrane. Functionally, required for the insertion and/or proper folding and/or complex formation of integral membrane proteins into the membrane. Involved in integration of membrane proteins that insert both dependently and independently of the Sec translocase complex, as well as at least some lipoproteins. Aids folding of multispanning membrane proteins. In Edwardsiella ictaluri (strain 93-146), this protein is Membrane protein insertase YidC.